A 339-amino-acid polypeptide reads, in one-letter code: Dihydroorotate dehydrogenase (quinone) (339 aa).

FMN is bound by residues 62–66 (AGMDK) and T86. Position 66 (K66) interacts with substrate. Residue 111–115 (NRMGF) coordinates substrate. N139 and N172 together coordinate FMN. N172 lines the substrate pocket. The active-site Nucleophile is S175. N177 contacts substrate. FMN contacts are provided by K217 and T245. Substrate is bound at residue 246 to 247 (NT). FMN is bound by residues G268, G297, and 318–319 (YS).

It belongs to the dihydroorotate dehydrogenase family. Type 2 subfamily. As to quaternary structure, monomer. Requires FMN as cofactor.

The protein localises to the cell membrane. The enzyme catalyses (S)-dihydroorotate + a quinone = orotate + a quinol. It functions in the pathway pyrimidine metabolism; UMP biosynthesis via de novo pathway; orotate from (S)-dihydroorotate (quinone route): step 1/1. Its function is as follows. Catalyzes the conversion of dihydroorotate to orotate with quinone as electron acceptor. In Shewanella sediminis (strain HAW-EB3), this protein is Dihydroorotate dehydrogenase (quinone).